Consider the following 261-residue polypeptide: Ribosomal RNA small subunit methyltransferase J (261 aa).

S-adenosyl-L-methionine is bound by residues 111–112 (RD), 127–128 (ER), 163–164 (SS), and D181.

It belongs to the methyltransferase superfamily. RsmJ family.

Its subcellular location is the cytoplasm. The catalysed reaction is guanosine(1516) in 16S rRNA + S-adenosyl-L-methionine = N(2)-methylguanosine(1516) in 16S rRNA + S-adenosyl-L-homocysteine + H(+). In terms of biological role, specifically methylates the guanosine in position 1516 of 16S rRNA. This is Ribosomal RNA small subunit methyltransferase J from Shewanella sp. (strain ANA-3).